Consider the following 1230-residue polypeptide: ATP-dependent helicase/nuclease subunit A (1230 aa).

Positions 9–480 (STWTDDQWKA…IDLNKNFRSR (472 aa)) constitute a UvrD-like helicase ATP-binding domain. Position 30–37 (30–37 (AAAGSGKT)) interacts with ATP. The 290-residue stretch at 507–796 (QAELKLGASY…RLMTIHSSKG (290 aa)) folds into the UvrD-like helicase C-terminal domain.

This sequence belongs to the helicase family. AddA subfamily. In terms of assembly, heterodimer of AddA and AddB/RexB. The cofactor is Mg(2+).

It carries out the reaction Couples ATP hydrolysis with the unwinding of duplex DNA by translocating in the 3'-5' direction.. It catalyses the reaction ATP + H2O = ADP + phosphate + H(+). Functionally, the heterodimer acts as both an ATP-dependent DNA helicase and an ATP-dependent, dual-direction single-stranded exonuclease. Recognizes the chi site generating a DNA molecule suitable for the initiation of homologous recombination. The AddA nuclease domain is required for chi fragment generation; this subunit has the helicase and 3' -&gt; 5' nuclease activities. In Bacillus licheniformis (strain ATCC 14580 / DSM 13 / JCM 2505 / CCUG 7422 / NBRC 12200 / NCIMB 9375 / NCTC 10341 / NRRL NRS-1264 / Gibson 46), this protein is ATP-dependent helicase/nuclease subunit A.